Here is a 264-residue protein sequence, read N- to C-terminus: Thiazole synthase (264 aa).

Lysine 106 (schiff-base intermediate with DXP) is an active-site residue. Residues glycine 167, 193-194 (AG), and 215-216 (NT) each bind 1-deoxy-D-xylulose 5-phosphate.

Belongs to the ThiG family. Homotetramer. Forms heterodimers with either ThiH or ThiS.

Its subcellular location is the cytoplasm. The catalysed reaction is [ThiS sulfur-carrier protein]-C-terminal-Gly-aminoethanethioate + 2-iminoacetate + 1-deoxy-D-xylulose 5-phosphate = [ThiS sulfur-carrier protein]-C-terminal Gly-Gly + 2-[(2R,5Z)-2-carboxy-4-methylthiazol-5(2H)-ylidene]ethyl phosphate + 2 H2O + H(+). It functions in the pathway cofactor biosynthesis; thiamine diphosphate biosynthesis. Functionally, catalyzes the rearrangement of 1-deoxy-D-xylulose 5-phosphate (DXP) to produce the thiazole phosphate moiety of thiamine. Sulfur is provided by the thiocarboxylate moiety of the carrier protein ThiS. In vitro, sulfur can be provided by H(2)S. The chain is Thiazole synthase from Xanthomonas campestris pv. campestris (strain 8004).